The primary structure comprises 347 residues: Probable dual-specificity RNA methyltransferase RlmN (347 aa).

The active-site Proton acceptor is the glutamate 90. Positions 96 to 326 constitute a Radical SAM core domain; the sequence is YKHGNSICIS…VTVRREMGSD (231 aa). A disulfide bridge connects residues cysteine 103 and cysteine 331. 3 residues coordinate [4Fe-4S] cluster: cysteine 110, cysteine 114, and cysteine 117. Residues 157 to 158, serine 189, 212 to 214, and asparagine 288 each bind S-adenosyl-L-methionine; these read GE and SLH. Cysteine 331 functions as the S-methylcysteine intermediate in the catalytic mechanism.

Belongs to the radical SAM superfamily. RlmN family. Requires [4Fe-4S] cluster as cofactor.

The protein localises to the cytoplasm. The catalysed reaction is adenosine(2503) in 23S rRNA + 2 reduced [2Fe-2S]-[ferredoxin] + 2 S-adenosyl-L-methionine = 2-methyladenosine(2503) in 23S rRNA + 5'-deoxyadenosine + L-methionine + 2 oxidized [2Fe-2S]-[ferredoxin] + S-adenosyl-L-homocysteine. The enzyme catalyses adenosine(37) in tRNA + 2 reduced [2Fe-2S]-[ferredoxin] + 2 S-adenosyl-L-methionine = 2-methyladenosine(37) in tRNA + 5'-deoxyadenosine + L-methionine + 2 oxidized [2Fe-2S]-[ferredoxin] + S-adenosyl-L-homocysteine. In terms of biological role, specifically methylates position 2 of adenine 2503 in 23S rRNA and position 2 of adenine 37 in tRNAs. The polypeptide is Probable dual-specificity RNA methyltransferase RlmN (Clostridium botulinum (strain Alaska E43 / Type E3)).